We begin with the raw amino-acid sequence, 302 residues long: Oxygen-dependent coproporphyrinogen-III oxidase (302 aa).

Ser-94 is a substrate binding site. Residues His-98 and His-108 each coordinate a divalent metal cation. His-108 functions as the Proton donor in the catalytic mechanism. 110 to 112 (NVR) is a substrate binding site. A divalent metal cation is bound by residues His-147 and His-177. The segment at 242-277 (YVEFNLVYDRGTLFGLQTGGRTESILMSMPPLVRWQ) is important for dimerization. Substrate is bound at residue 260–262 (GGR).

The protein belongs to the aerobic coproporphyrinogen-III oxidase family. As to quaternary structure, homodimer. A divalent metal cation serves as cofactor.

It localises to the cytoplasm. The enzyme catalyses coproporphyrinogen III + O2 + 2 H(+) = protoporphyrinogen IX + 2 CO2 + 2 H2O. Its pathway is porphyrin-containing compound metabolism; protoporphyrin-IX biosynthesis; protoporphyrinogen-IX from coproporphyrinogen-III (O2 route): step 1/1. In terms of biological role, involved in the heme biosynthesis. Catalyzes the aerobic oxidative decarboxylation of propionate groups of rings A and B of coproporphyrinogen-III to yield the vinyl groups in protoporphyrinogen-IX. The protein is Oxygen-dependent coproporphyrinogen-III oxidase of Shewanella putrefaciens (strain CN-32 / ATCC BAA-453).